Consider the following 338-residue polypeptide: UPF0324 membrane protein NMA0465 (338 aa).

The next 10 membrane-spanning stretches (helical) occupy residues 5–23 (PFYFGLIFIAIIAILANYL), 33–55 (HISALIIAILLGMAIGNTIYPQF), 62–84 (GVLFAKGALLRTGIVLYGFRLTF), 94–116 (AVVTDAIMLISTFFFTVLLGIRY), 123–145 (LVYLTGAGCSICGAAAVMAAESV), 155–177 (VAIAIVVIFGTLAIFTYPLFYTW), 222–239 (IRVMMLAPFLLMLSWLLT), 254–273 (IPWFAVLFIGVAIFNSFDLL), 280–302 (LFVEIDSFLLISSMAALGLTTHA), and 312–334 (PFVLGILTYLWLVVGGFLVNYGI).

This sequence belongs to the UPF0324 family.

It is found in the cell membrane. The chain is UPF0324 membrane protein NMA0465 from Neisseria meningitidis serogroup A / serotype 4A (strain DSM 15465 / Z2491).